We begin with the raw amino-acid sequence, 153 residues long: Mitotic-spindle organizing protein 2 (153 aa).

The tract at residues 80–153 is disordered; the sequence is KVSETSTGDA…SSSSSQLTSN (74 aa). Polar residues-rich tracts occupy residues 81-99 and 107-133; these read VSET…TAVP and KMSS…SATR. The segment covering 134 to 153 has biased composition (low complexity); that stretch reads GQKSTKSSGSSSSSSQLTSN.

Belongs to the MOZART2 family. As to quaternary structure, part of the gamma-tubulin complex. Interacts with TUBG1.

It is found in the cytoplasm. Its subcellular location is the cytoskeleton. It localises to the microtubule organizing center. The protein localises to the centrosome. The protein resides in the spindle. This is Mitotic-spindle organizing protein 2 (mzt2) from Danio rerio (Zebrafish).